Here is a 1235-residue protein sequence, read N- to C-terminus: MSDDEYGDIDAAVWDEAEALTQASQTLPSNFPHRRKRRRIGSEELDDGFLSGRRRGSHGFSRSDNDEADEKKSKYRIHLGAEEVPAAVIMGATQADEMPDSSPYRIRGPIYKRPRRSPPMELEQKSSPAQPSMVESAKTQKQNIVHSPQPTAQYDFSRELEDLPSDAFSPSPPQLRMSSIPITISSSPPLESTQSVRSQRLAAPQNGLRQTTLFGGRAPNQVPSSTQAKKVHKYLVDKVPEPPTHHTLDEEAIKTWIYPNNLGAERRYQYTIVHKGLFNNLLVALPTGLGKTFIAATIMLNFFRWTTDSQIVFMAPTKPLVSQQVKACFEIAGIPRSSTTMLTGDQSPALRAEEWAEKRVFFMTPQTVENDLKTGIADPKKIALIVVDEAHRATGNYAYTKVVQFLRRFNESFRVLALTATPGSSVEAVQEVIDNLEIAEVEIRTEDSIDIKEYVHRRDITEILIDPSDEIIMIRELFSKALQPLVNLLCSQKAYYNKDPMGLTQYGMLTARKAWMASGAGKSAQMSIKGMMNALFTVLTSMGHAIKLLNFHGIGPFFSNIKDFRAEVEGNKKGGKYKNQIVNSPEFKKMMERIQGWINKEDFIGHPKLTYLCDTVLNHFLDAGAGLMGDNMPPSSTRVIVFTEYRDSAEDIARVLNKHGPMIRASVFVGQSDSKRSEGMNQEKQLETIRKFKAGGINVIVATSIGEEGLDIGEVDLIVCYDSSSSPIRMLQRMGRTGRKRAGKIVLLLMRGKEEDSYKKSKDNYEQIQRMISSGSRFTFRHDLSARIIPRKVKPEVDKRFIEIPLENTQDPSLPEPKRRAKPRKKLAKKFHMPDGVETGFRKASKLNSNAESPLTKFGIKRKPSELNDDELAPVPLLDSVLLNAKDEAEHSRRFLKVPDGALEEVGMPDLTAQPITQRTLTRTAKVSHGKYTRSCVSLFNKLSRLQRPEDRDNKPYGDEPPSDFGSIPTMPLEAEVRARAPKAPKASDPAQVVKASRVAKTTSALKKAPASKRVAPKKAKPRRGRALRNDNSDSEDSTASMAMVSNLRSSQIPQPTPDSDEEGPGERVDRTSDMEELEADDDSDLGSLVDFIDPTQTQTQIPLTGTSNFSSSPPLMETWEDERINGNAVGGRRGMLPRAVEMTGAKNSSFKNGTMTQESSDGGDSMDSDFPTIEDLVRSDTTTTTTRKIADPPSSSVFSSGQKATPNMFTRKRDGDVRGRGLKRRVVESDDSDE.

2 disordered regions span residues 20–78 and 96–148; these read LTQA…YRIH and DEMP…VHSP. Residues 61-72 show a composition bias toward basic and acidic residues; it reads SRSDNDEADEKK. Residues 137–148 are compositionally biased toward polar residues; sequence AKTQKQNIVHSP. The region spanning 272–440 is the Helicase ATP-binding domain; the sequence is IVHKGLFNNL…EVIDNLEIAE (169 aa). 285-292 lines the ATP pocket; the sequence is LPTGLGKT. The DEAH box signature appears at 388 to 391; it reads DEAH. The 177-residue stretch at 608–784 folds into the Helicase C-terminal domain; sequence KLTYLCDTVL…GSRFTFRHDL (177 aa). 3 disordered regions span residues 808-827, 944-1117, and 1144-1235; these read NTQDPSLPEPKRRAKPRKKL, SRLQ…PPLM, and TGAK…DSDE. Over residues 947–958 the composition is skewed to basic and acidic residues; sequence QRPEDRDNKPYG. A compositionally biased stretch (basic residues) spans 1015 to 1027; it reads VAPKKAKPRRGRA. The segment covering 1065–1074 has biased composition (basic and acidic residues); the sequence is PGERVDRTSD. The span at 1075–1085 shows a compositional bias: acidic residues; it reads MEELEADDDSD. 2 stretches are compositionally biased toward polar residues: residues 1095–1114 and 1146–1159; these read PTQTQTQIPLTGTSNFSSSP and AKNSSFKNGTMTQE. Over residues 1160–1170 the composition is skewed to low complexity; that stretch reads SSDGGDSMDSD. The span at 1194–1209 shows a compositional bias: polar residues; the sequence is PSSSVFSSGQKATPNM.

This sequence belongs to the DEAD box helicase family. DEAH subfamily. FANCM sub-subfamily. Interacts with the MHF histone-fold complex to form the FANCM-MHF complex.

The protein localises to the nucleus. It catalyses the reaction ATP + H2O = ADP + phosphate + H(+). Functionally, ATP-dependent DNA helicase involved in DNA damage repair by homologous recombination and in genome maintenance. Capable of unwinding D-loops. Plays a role in limiting crossover recombinants during mitotic DNA double-strand break (DSB) repair. Component of a FANCM-MHF complex which promotes gene conversion at blocked replication forks, probably by reversal of the stalled fork. The chain is ATP-dependent DNA helicase mph1 from Sclerotinia sclerotiorum (strain ATCC 18683 / 1980 / Ss-1) (White mold).